Reading from the N-terminus, the 391-residue chain is MRKLFLLSILMIGVIVAFAGCVEESKTTTQLQQTTQSESQKAETQPKLGVNVVRYAETFKLYPHWDEGYCVVADSVGNKFVLVEGNAKAPNISDGKIIKVPVKRIVTDFYCPIISAADILNAYHHTIVGAPKYAVEKSPKLKELFDEGKVVDIGSPSKGVNYELIVNLTPDIVFLGDWKSEDVVEEKLKELGVTVSRFYTYQEPTYMGRVEWIKFAAAFWGSNAYKKADKWFENVVKVRENILKKVQNVTNEPTVVIFSWSKTKNMPGIYGNDSYYSKMIAEFKGKNVFDDYNRGYQYVDKETFYERAMNADVVILIWFYGDVKTKEDLLKINPNFAEFKAFKTGRFYVSHPDYYVWEARDPAGYMMDFAKMIHPELFGGDDDLKYYYKIK.

Residues 1–20 (MRKLFLLSILMIGVIVAFAG) form the signal peptide. Cys-21 is lipidated: S-archaeol cysteine. A Fe/B12 periplasmic-binding domain is found at 104–377 (RIVTDFYCPI…DFAKMIHPEL (274 aa)).

The protein localises to the cell membrane. This is an uncharacterized protein from Methanocaldococcus jannaschii (strain ATCC 43067 / DSM 2661 / JAL-1 / JCM 10045 / NBRC 100440) (Methanococcus jannaschii).